A 353-amino-acid polypeptide reads, in one-letter code: C-X-C chemokine receptor type 4 (353 aa).

Positions 1 to 22 (MDGFRIFTSDNYTEDDLGSGDY) are important for chemokine binding and signaling. Over 1 to 39 (MDGFRIFTSDNYTEDDLGSGDYDSIKEPCFREENAHFNR) the chain is Extracellular. A glycan (N-linked (GlcNAc...) asparagine) is linked at Asn11. Position 12 is a sulfotyrosine (Tyr12). A glycan (O-linked (Xyl...) (chondroitin sulfate) serine) is linked at Ser19. The residue at position 22 (Tyr22) is a Sulfotyrosine. 2 disulfide bridges follow: Cys29–Cys275 and Cys110–Cys187. The helical transmembrane segment at 40–64 (IFLPTVYSIIFLTGIVGNGLVILVM) threads the bilayer. The Cytoplasmic segment spans residues 65 to 78 (GYQKKLRSMTDKYR). The helical transmembrane segment at 79–100 (LHLSVADLLFVLTLPFWAVDAV) threads the bilayer. The segment at 95–98 (WAVD) is chemokine binding. Residues 101–111 (ANWYFGKFLCK) are Extracellular-facing. Residues 112 to 131 (AVHVIYTVNLYSSVLILAFI) traverse the membrane as a helical segment. A chemokine binding region spans residues 114 to 118 (HVIYT). The Cytoplasmic portion of the chain corresponds to 132 to 155 (SLDRYLAIVHATNSQRPRKLLAEK). The Important for signaling signature appears at 134–136 (DRY). The segment at 136–148 (YLAIVHATNSQRP) is involved in dimerization; when bound to chemokine. The helical transmembrane segment at 156–175 (VVYVGVWIPALLLTIPDFIF) threads the bilayer. Over 176-196 (ANVREGDGRYICDRFYPNDLW) the chain is Extracellular. Residues 187–191 (CDRFY) are chemokine binding, important for signaling. Residues 192–211 (PNDLWLVVFQFQHIMVGLIL) form an involved in dimerization region. A helical transmembrane segment spans residues 197–217 (LVVFQFQHIMVGLILPGIVIL). Residues 218-242 (SCYCIIISKLSHSKGYQKRKALKTT) are Cytoplasmic-facing. The helical transmembrane segment at 243–262 (VILILAFFACWLPYYIGISI) threads the bilayer. Residues 263–283 (DSFILLEIIQQGCEFESTVHK) lie on the Extracellular side of the membrane. Residues 267–269 (LLE) form an involved in dimerization region. The helical transmembrane segment at 284–303 (WISITEALAFFHCCLNPILY) threads the bilayer. Residues 304–353 (AFLGAKFKTSAQHALTSVSRGSSLKILSKGKRGGHSSVSTESESSSFHSS) lie on the Cytoplasmic side of the membrane. Phosphoserine is present on residues Ser320 and Ser322. Ser325 and Ser326 each carry phosphoserine; by PKC and GRK6. The segment at 330–353 (LSKGKRGGHSSVSTESESSSFHSS) is disordered. The residue at position 331 (Ser331) is a Phosphoserine; by GRK6. Residue Lys332 forms a Glycyl lysine isopeptide (Lys-Gly) (interchain with G-Cter in ubiquitin) linkage. Over residues 338–353 (HSSVSTESESSSFHSS) the composition is skewed to low complexity. A Phosphoserine; by GRK6 modification is found at Ser340. Phosphoserine is present on residues Ser349 and Ser352.

This sequence belongs to the G-protein coupled receptor 1 family. Monomer. Can form homodimers. Interacts with CD164. Interacts with ARRB2; the interaction is dependent on the C-terminal phosphorylation of CXCR4 and allows activation of MAPK1 and MAPK3. Interacts with ARR3; the interaction is dependent on the C-terminal phosphorylation of CXCR4 and modulates calcium mobilization. Interacts with RNF113A; the interaction, enhanced by CXCL12, promotes CXCR4 ubiquitination and subsequent degradation. Interacts (via the cytoplasmic C-terminal) with ITCH (via the WW domains I and II); the interaction, enhanced by CXCL12, promotes CXCR4 ubiquitination and leads to its degradation. Interacts with extracellular ubiquitin. Interacts with DBN1; this interaction is enhanced by antigenic stimulation. Following LPS binding, may form a complex with GDF5, HSP90AA1 and HSPA8. Post-translationally, phosphorylated on agonist stimulation. Rapidly phosphorylated on serine and threonine residues in the C-terminal. Phosphorylation at Ser-325 and Ser-326 leads to recruitment of ITCH, ubiquitination and protein degradation. Ubiquitinated after ligand binding, leading to its degradation. Ubiquitinated by ITCH at the cell membrane on agonist stimulation. The ubiquitin-dependent mechanism, endosomal sorting complex required for transport (ESCRT), then targets CXCR4 for lysosomal degradation. This process is dependent also on prior Ser-/Thr-phosphorylation in the C-terminal of CXCR4. Also binding of ARRB1 to STAM negatively regulates CXCR4 sorting to lysosomes though modulating ubiquitination of SFR5S. In terms of processing, sulfation is required for efficient binding of CXCL12/SDF-1alpha and promotes its dimerization. Post-translationally, O- and N-glycosylated. N-glycosylation can mask coreceptor function. The O-glycosylation chondroitin sulfate attachment does not affect interaction with CXCL12/SDF-1alpha nor its coreceptor activity.

Its subcellular location is the cell membrane. It localises to the cell junction. The protein resides in the early endosome. The protein localises to the late endosome. It is found in the lysosome. Receptor for the C-X-C chemokine CXCL12/SDF-1 that transduces a signal by increasing intracellular calcium ion levels and enhancing MAPK1/MAPK3 activation. Involved in the AKT signaling cascade. Plays a role in regulation of cell migration, e.g. during wound healing. Acts as a receptor for extracellular ubiquitin; leading to enhanced intracellular calcium ions and reduced cellular cAMP levels. Binds bacterial lipopolysaccharide (LPS) et mediates LPS-induced inflammatory response, including TNF secretion by monocytes. Involved in hematopoiesis and in cardiac ventricular septum formation. Also plays an essential role in vascularization of the gastrointestinal tract, probably by regulating vascular branching and/or remodeling processes in endothelial cells. Involved in cerebellar development. In the CNS, could mediate hippocampal-neuron survival. The polypeptide is C-X-C chemokine receptor type 4 (CXCR4) (Sus scrofa (Pig)).